An 848-amino-acid chain; its full sequence is Aryl hydrocarbon receptor (848 aa).

N-acetylmethionine is present on Met1. The propeptide occupies 1–10 (MNSSSANITY). Polar residues predominate over residues 1 to 10 (MNSSSANITY). Residues 1–39 (MNSSSANITYASRKRRKPVQKTVKPIPAEGIKSNPSKRH) form a disordered region. Short sequence motifs (nuclear localization signal) lie at residues 13–16 (RKRR) and 37–42 (KRHRDR). In terms of domain architecture, bHLH spans 27–80 (PAEGIKSNPSKRHRDRLNTELDRLASLLPFPQDVINKLDKLSVLRLSVSYLRAK). The interval 38-66 (RHRDRLNTELDRLASLLPFPQDVINKLDK) is DNA-binding. 3 required for maintaining the overall integrity of the AHR:ARNT heterodimer and its transcriptional activity regions span residues 50 to 82 (LASLLPFPQDVINKLDKLSVLRLSVSYLRAKSF), 118 to 126 (LLQALNGFV), and 266 to 268 (FAI). The short motif at 64 to 72 (LDKLSVLRL) is the Nuclear export signal element. Positions 111-181 (NLQEGEFLLQ…RQLHWALNPS (71 aa)) constitute a PAS 1 domain. In terms of domain architecture, PAS 2 spans 275 to 342 (PSILEIRTKN…CAESHIRMIK (68 aa)). The region spanning 348–386 (MIVFRLLTKNNRWTWVQSNARLLYKNGRPDYIIVTQRPL) is the PAC domain. The disordered stretch occupies residues 824–848 (TTHLQPLHHPSEARPFPDLTSSGFL).

Homodimer. Heterodimer; efficient DNA binding requires dimerization with another bHLH protein. Interacts with ARNT; the heterodimer ARNT:AHR binds to core DNA sequence 5'-TGCGTG-3' within the dioxin response element (DRE) of target gene promoters and activates their transcription. Binds MYBBP1A. Interacts with coactivators including SRC-1, RIP140 and NOCA7, and with the corepressor SMRT. Interacts with NEDD8 and IVNS1ABP. Interacts with BMAL1. Interacts with HSP90AB1. Interacts with TIPARP; leading to mono-ADP-ribosylation of AHR and subsequent inhibition of AHR. In terms of processing, mono-ADP-ribosylated, leading to inhibit transcription activator activity of AHR. Expressed in all tissues tested including blood, brain, heart, kidney, liver, lung, pancreas and skeletal muscle. Expressed in retinal photoreceptors.

Its subcellular location is the cytoplasm. It localises to the nucleus. In terms of biological role, ligand-activated transcription factor that enables cells to adapt to changing conditions by sensing compounds from the environment, diet, microbiome and cellular metabolism, and which plays important roles in development, immunity and cancer. Upon ligand binding, translocates into the nucleus, where it heterodimerizes with ARNT and induces transcription by binding to xenobiotic response elements (XRE). Regulates a variety of biological processes, including angiogenesis, hematopoiesis, drug and lipid metabolism, cell motility and immune modulation. Xenobiotics can act as ligands: upon xenobiotic-binding, activates the expression of multiple phase I and II xenobiotic chemical metabolizing enzyme genes (such as the CYP1A1 gene). Mediates biochemical and toxic effects of halogenated aromatic hydrocarbons. Next to xenobiotics, natural ligands derived from plants, microbiota, and endogenous metabolism are potent AHR agonists. Tryptophan (Trp) derivatives constitute an important class of endogenous AHR ligands. Acts as a negative regulator of anti-tumor immunity: indoles and kynurenic acid generated by Trp catabolism act as ligand and activate AHR, thereby promoting AHR-driven cancer cell motility and suppressing adaptive immunity. Regulates the circadian clock by inhibiting the basal and circadian expression of the core circadian component PER1. Inhibits PER1 by repressing the CLOCK-BMAL1 heterodimer mediated transcriptional activation of PER1. The heterodimer ARNT:AHR binds to core DNA sequence 5'-TGCGTG-3' within the dioxin response element (DRE) of target gene promoters and activates their transcription. In Homo sapiens (Human), this protein is Aryl hydrocarbon receptor.